An 85-amino-acid polypeptide reads, in one-letter code: uncharacterized protein (85 aa).

The protein belongs to the YciI family.

This is an uncharacterized protein from Bacillus subtilis (strain 168).